Consider the following 361-residue polypeptide: Phosphate acyltransferase (361 aa).

A disordered region spans residues 342–361 (ADGAAAEQGPTPRRTAPRQT).

The protein belongs to the PlsX family. Homodimer. Probably interacts with PlsY.

The protein localises to the cytoplasm. It carries out the reaction a fatty acyl-[ACP] + phosphate = an acyl phosphate + holo-[ACP]. Its pathway is lipid metabolism; phospholipid metabolism. In terms of biological role, catalyzes the reversible formation of acyl-phosphate (acyl-PO(4)) from acyl-[acyl-carrier-protein] (acyl-ACP). This enzyme utilizes acyl-ACP as fatty acyl donor, but not acyl-CoA. This chain is Phosphate acyltransferase, found in Anaeromyxobacter sp. (strain K).